Here is a 427-residue protein sequence, read N- to C-terminus: Enolase (427 aa).

A (2R)-2-phosphoglycerate-binding site is contributed by Gln163. Glu205 serves as the catalytic Proton donor. Residues Asp242, Glu285, and Asp312 each coordinate Mg(2+). Positions 337, 366, 367, and 388 each coordinate (2R)-2-phosphoglycerate. Lys337 acts as the Proton acceptor in catalysis.

The protein belongs to the enolase family. Mg(2+) serves as cofactor.

The protein resides in the cytoplasm. It localises to the secreted. The protein localises to the cell surface. It catalyses the reaction (2R)-2-phosphoglycerate = phosphoenolpyruvate + H2O. It functions in the pathway carbohydrate degradation; glycolysis; pyruvate from D-glyceraldehyde 3-phosphate: step 4/5. Functionally, catalyzes the reversible conversion of 2-phosphoglycerate (2-PG) into phosphoenolpyruvate (PEP). It is essential for the degradation of carbohydrates via glycolysis. The chain is Enolase from Ralstonia pickettii (strain 12J).